The chain runs to 243 residues: Phosphoadenosine 5'-phosphosulfate reductase (243 aa).

Catalysis depends on cysteine 239, which acts as the Nucleophile; cysteine thiosulfonate intermediate.

The protein belongs to the PAPS reductase family. CysH subfamily.

Its subcellular location is the cytoplasm. It catalyses the reaction [thioredoxin]-disulfide + sulfite + adenosine 3',5'-bisphosphate + 2 H(+) = [thioredoxin]-dithiol + 3'-phosphoadenylyl sulfate. It functions in the pathway sulfur metabolism; hydrogen sulfide biosynthesis; sulfite from sulfate: step 3/3. In terms of biological role, catalyzes the formation of sulfite from phosphoadenosine 5'-phosphosulfate (PAPS) using thioredoxin as an electron donor. The sequence is that of Phosphoadenosine 5'-phosphosulfate reductase from Proteus mirabilis (strain HI4320).